The following is a 505-amino-acid chain: 2-isopropylmalate synthase (505 aa).

Residues 5–267 (VYIFDTTLRD…YTNIKTEEIY (263 aa)) form the Pyruvate carboxyltransferase domain. D14, H202, H204, and N238 together coordinate Mn(2+). The interval 391-505 (TLEYLHISSG…VNKLIWDSQK (115 aa)) is regulatory domain.

It belongs to the alpha-IPM synthase/homocitrate synthase family. LeuA type 1 subfamily. Homodimer. Mn(2+) serves as cofactor.

It localises to the cytoplasm. The enzyme catalyses 3-methyl-2-oxobutanoate + acetyl-CoA + H2O = (2S)-2-isopropylmalate + CoA + H(+). It functions in the pathway amino-acid biosynthesis; L-leucine biosynthesis; L-leucine from 3-methyl-2-oxobutanoate: step 1/4. In terms of biological role, catalyzes the condensation of the acetyl group of acetyl-CoA with 3-methyl-2-oxobutanoate (2-ketoisovalerate) to form 3-carboxy-3-hydroxy-4-methylpentanoate (2-isopropylmalate). This chain is 2-isopropylmalate synthase, found in Pelotomaculum thermopropionicum (strain DSM 13744 / JCM 10971 / SI).